The sequence spans 321 residues: Carnitine monooxygenase reductase subunit (321 aa).

Positions 4–109 constitute an FAD-binding FR-type domain; sequence YQMFEVQVSQ…STPNNLFALI (106 aa). In terms of domain architecture, 2Fe-2S ferredoxin-type spans 233–321; the sequence is DAFTLVLARS…AKGKRLVLDL (89 aa). [2Fe-2S] cluster is bound by residues C270, C275, C278, and C308.

It belongs to the PDR/VanB family. CntB subfamily. Composed of an oxygenase subunit (yeaW) and a reductase subunit (yeaX). The cofactor is FMN. [2Fe-2S] cluster is required as a cofactor.

It carries out the reaction (R)-carnitine + NADH + O2 + H(+) = (3R)-3-hydroxy-4-oxobutanoate + trimethylamine + NAD(+) + H2O. The catalysed reaction is (R)-carnitine + NADPH + O2 + H(+) = (3R)-3-hydroxy-4-oxobutanoate + trimethylamine + NADP(+) + H2O. It participates in amine and polyamine metabolism; carnitine metabolism. Its function is as follows. Converts carnitine to trimethylamine and malic semialdehyde. Can also use gamma-butyrobetaine, choline and betaine as substrates. The protein is Carnitine monooxygenase reductase subunit (yeaX) of Escherichia coli (strain K12).